The sequence spans 569 residues: 2-succinyl-5-enolpyruvyl-6-hydroxy-3-cyclohexene-1-carboxylate synthase (569 aa).

The protein belongs to the TPP enzyme family. MenD subfamily. As to quaternary structure, homodimer. Mg(2+) serves as cofactor. It depends on Mn(2+) as a cofactor. Requires thiamine diphosphate as cofactor.

The enzyme catalyses isochorismate + 2-oxoglutarate + H(+) = 5-enolpyruvoyl-6-hydroxy-2-succinyl-cyclohex-3-ene-1-carboxylate + CO2. It participates in quinol/quinone metabolism; 1,4-dihydroxy-2-naphthoate biosynthesis; 1,4-dihydroxy-2-naphthoate from chorismate: step 2/7. The protein operates within quinol/quinone metabolism; menaquinone biosynthesis. Catalyzes the thiamine diphosphate-dependent decarboxylation of 2-oxoglutarate and the subsequent addition of the resulting succinic semialdehyde-thiamine pyrophosphate anion to isochorismate to yield 2-succinyl-5-enolpyruvyl-6-hydroxy-3-cyclohexene-1-carboxylate (SEPHCHC). This chain is 2-succinyl-5-enolpyruvyl-6-hydroxy-3-cyclohexene-1-carboxylate synthase, found in Shewanella halifaxensis (strain HAW-EB4).